Here is a 572-residue protein sequence, read N- to C-terminus: Proline--tRNA ligase (572 aa).

The protein belongs to the class-II aminoacyl-tRNA synthetase family. ProS type 1 subfamily. As to quaternary structure, homodimer.

It localises to the cytoplasm. It carries out the reaction tRNA(Pro) + L-proline + ATP = L-prolyl-tRNA(Pro) + AMP + diphosphate. Its function is as follows. Catalyzes the attachment of proline to tRNA(Pro) in a two-step reaction: proline is first activated by ATP to form Pro-AMP and then transferred to the acceptor end of tRNA(Pro). As ProRS can inadvertently accommodate and process non-cognate amino acids such as alanine and cysteine, to avoid such errors it has two additional distinct editing activities against alanine. One activity is designated as 'pretransfer' editing and involves the tRNA(Pro)-independent hydrolysis of activated Ala-AMP. The other activity is designated 'posttransfer' editing and involves deacylation of mischarged Ala-tRNA(Pro). The misacylated Cys-tRNA(Pro) is not edited by ProRS. This is Proline--tRNA ligase from Yersinia pseudotuberculosis serotype O:1b (strain IP 31758).